We begin with the raw amino-acid sequence, 185 residues long: Ribosome-recycling factor (185 aa).

Belongs to the RRF family.

It is found in the cytoplasm. Functionally, responsible for the release of ribosomes from messenger RNA at the termination of protein biosynthesis. May increase the efficiency of translation by recycling ribosomes from one round of translation to another. The protein is Ribosome-recycling factor of Aeromonas salmonicida (strain A449).